Consider the following 478-residue polypeptide: UDP-N-acetylmuramate--L-alanine ligase (478 aa).

Gly112–Thr118 lines the ATP pocket.

Belongs to the MurCDEF family.

The protein resides in the cytoplasm. It carries out the reaction UDP-N-acetyl-alpha-D-muramate + L-alanine + ATP = UDP-N-acetyl-alpha-D-muramoyl-L-alanine + ADP + phosphate + H(+). The protein operates within cell wall biogenesis; peptidoglycan biosynthesis. Its function is as follows. Cell wall formation. The protein is UDP-N-acetylmuramate--L-alanine ligase of Polynucleobacter asymbioticus (strain DSM 18221 / CIP 109841 / QLW-P1DMWA-1) (Polynucleobacter necessarius subsp. asymbioticus).